Here is a 132-residue protein sequence, read N- to C-terminus: Small ribosomal subunit protein uS11 (132 aa).

This sequence belongs to the universal ribosomal protein uS11 family. Part of the 30S ribosomal subunit.

Functionally, located on the platform of the 30S subunit. The protein is Small ribosomal subunit protein uS11 of Thermoplasma volcanium (strain ATCC 51530 / DSM 4299 / JCM 9571 / NBRC 15438 / GSS1).